Consider the following 211-residue polypeptide: 3-demethoxyubiquinol 3-hydroxylase (211 aa).

6 residues coordinate Fe cation: E60, E90, H93, E142, E174, and H177.

This sequence belongs to the COQ7 family. The cofactor is Fe cation.

Its subcellular location is the cell membrane. It carries out the reaction a 5-methoxy-2-methyl-3-(all-trans-polyprenyl)benzene-1,4-diol + AH2 + O2 = a 3-demethylubiquinol + A + H2O. Its pathway is cofactor biosynthesis; ubiquinone biosynthesis. Functionally, catalyzes the hydroxylation of 2-nonaprenyl-3-methyl-6-methoxy-1,4-benzoquinol during ubiquinone biosynthesis. The chain is 3-demethoxyubiquinol 3-hydroxylase from Francisella tularensis subsp. holarctica (strain FTNF002-00 / FTA).